Reading from the N-terminus, the 85-residue chain is Small ribosomal subunit protein bS18 (85 aa).

It belongs to the bacterial ribosomal protein bS18 family. Part of the 30S ribosomal subunit. Forms a tight heterodimer with protein bS6.

Binds as a heterodimer with protein bS6 to the central domain of the 16S rRNA, where it helps stabilize the platform of the 30S subunit. The protein is Small ribosomal subunit protein bS18 of Helicobacter acinonychis (strain Sheeba).